The chain runs to 158 residues: MVESINSLEELGTVAKTEAAAPVDVQKLDAQGRAYATGKRKDAVARVWVKPGTGKITVNDKEFEKYFARPVLQMILQQPIVASNRAGQFDIVATVAGGGLSGQAGAVRHGISKALTYYEPGLRTVLKKGGFLTRDSRVVERKKYGKAKARRSFQFSKR.

The protein belongs to the universal ribosomal protein uS9 family.

This chain is Small ribosomal subunit protein uS9, found in Brucella melitensis biotype 2 (strain ATCC 23457).